A 53-amino-acid polypeptide reads, in one-letter code: ATP synthase protein 8 (53 aa).

Residues 9-29 (WIFFLFFFICIFLIFNIMNYF) traverse the membrane as a helical segment.

This sequence belongs to the ATPase protein 8 family. In terms of assembly, F-type ATPases have 2 components, CF(1) - the catalytic core - and CF(0) - the membrane proton channel.

The protein resides in the mitochondrion membrane. Functionally, mitochondrial membrane ATP synthase (F(1)F(0) ATP synthase or Complex V) produces ATP from ADP in the presence of a proton gradient across the membrane which is generated by electron transport complexes of the respiratory chain. F-type ATPases consist of two structural domains, F(1) - containing the extramembraneous catalytic core and F(0) - containing the membrane proton channel, linked together by a central stalk and a peripheral stalk. During catalysis, ATP synthesis in the catalytic domain of F(1) is coupled via a rotary mechanism of the central stalk subunits to proton translocation. Part of the complex F(0) domain. Minor subunit located with subunit a in the membrane. This Bombyx mori (Silk moth) protein is ATP synthase protein 8 (mt:ATPase8).